The chain runs to 582 residues: Guanine nucleotide-binding protein-like NSN1 (582 aa).

Positions 1–46 are enriched in basic residues; it reads MVKRSKKSKSKRVTLKQKHKVLKKVKEHHKKKAKDAKKLGLHRKPR. The interval 1-58 is disordered; sequence MVKRSKKSKSKRVTLKQKHKVLKKVKEHHKKKAKDAKKLGLHRKPRVEKDPGIPNDWP. Residues 2-49 form a basic region; sequence VKRSKKSKSKRVTLKQKHKVLKKVKEHHKKKAKDAKKLGLHRKPRVEK. 3 short sequence motifs (nuclear localization signal) span residues 5-12, 22-29, and 69-76; these read SKKSKSKR, LKKVKEHH, and VRRARALE. Residues 15-94 adopt a coiled-coil conformation; the sequence is LKQKHKVLKK…RKERAKKRKL (80 aa). In terms of domain architecture, CP-type G spans 127-311; it reads YKELVKVIEL…LLDCPGVVML (185 aa). The DARXP motif motif lies at 145-149; the sequence is DARDP. The G4 stretch occupies residues 175–178; the sequence is NKID. 175-178 serves as a coordination point for GTP; sequence NKID. Residues 202–204 are G5; the sequence is KCS. Residues 260 to 267 are G1; sequence GLPNVGKS. 263-268 is a binding site for GTP; sequence NVGKSS. The tract at residues 281–456 is intermediate; that stretch reads VGATPGLTRS…NEFNPVIIPS (176 aa). The tract at residues 286 to 290 is G2; the sequence is GLTRS. GTP-binding positions include 304–307 and G307; that span reads DCPG. Positions 304–307 are G3; the sequence is DCPG. The segment at 463-551 is acidic; sequence DETMIEDESK…EEDLMDGDYD (89 aa). The tract at residues 469 to 545 is disordered; that stretch reads DESKTQTEEE…KKAGADEEDL (77 aa). The segment covering 476–496 has biased composition (acidic residues); it reads EEEAEHESDDDESMGGEEEEE. Residues 497 to 506 show a composition bias toward basic and acidic residues; sequence AGKTKEKSET. Positions 515–537 form a coiled coil; it reads AAESMLNTKKQKAEKKKRKKAKK. The short motif at 522–529 is the Nuclear localization signal 4 element; the sequence is TKKQKAEK. Residues 523–537 are compositionally biased toward basic residues; that stretch reads KKQKAEKKKRKKAKK.

This sequence belongs to the TRAFAC class YlqF/YawG GTPase family. In terms of assembly, interacts with EBP2 and PES. As to expression, mostly expressed in flowers, siliques and inflorescence apex, and, to a lower extent, in stems and leaves.

It is found in the nucleus. The protein resides in the nucleolus. Functionally, involved in the differentiation of epidermal cells, probably via the regulation of the expression of meristem-related genes (e.g. CLV3, STM, KNAT1, CUC2 and AG) and of leaf polarity-related genes (e.g. YAB5, FIL, AS2, PHB and PHV). May play a role in regulating cellular proliferation. Necessary for flower development, probably by preventing apical dominance through the down-regulation of AG expression. Required for embryogenesis, leaf and cotyledon development, as well as for leaf polarity establishment. Plays an important role in plant growth and senescence by modulating ribosome biogenesis in nucleolus. Possesses GTPAse activity in vitro. Possesses RNA binding activity in vitro. Associates with ribosomes. This Arabidopsis thaliana (Mouse-ear cress) protein is Guanine nucleotide-binding protein-like NSN1.